We begin with the raw amino-acid sequence, 253 residues long: Phosphate import ATP-binding protein PstB (253 aa).

Residues 5-248 (IQVRDLNAYY…PSDKRTEDYI (244 aa)) enclose the ABC transporter domain. 37-44 (GPSGCGKS) is a binding site for ATP.

It belongs to the ABC transporter superfamily. Phosphate importer (TC 3.A.1.7) family. As to quaternary structure, the complex is composed of two ATP-binding proteins (PstB), two transmembrane proteins (PstC and PstA) and a solute-binding protein (PstS).

It is found in the cell inner membrane. The enzyme catalyses phosphate(out) + ATP + H2O = ADP + 2 phosphate(in) + H(+). Part of the ABC transporter complex PstSACB involved in phosphate import. Responsible for energy coupling to the transport system. The polypeptide is Phosphate import ATP-binding protein PstB (Koribacter versatilis (strain Ellin345)).